Here is a 133-residue protein sequence, read N- to C-terminus: UPF0102 protein Fnod_1509 (133 aa).

This sequence belongs to the UPF0102 family.

The polypeptide is UPF0102 protein Fnod_1509 (Fervidobacterium nodosum (strain ATCC 35602 / DSM 5306 / Rt17-B1)).